The primary structure comprises 134 residues: Small ribosomal subunit protein uS8c (134 aa).

Belongs to the universal ribosomal protein uS8 family. In terms of assembly, part of the 30S ribosomal subunit.

It is found in the plastid. It localises to the chloroplast. Functionally, one of the primary rRNA binding proteins, it binds directly to 16S rRNA central domain where it helps coordinate assembly of the platform of the 30S subunit. In Gossypium hirsutum (Upland cotton), this protein is Small ribosomal subunit protein uS8c (rps8).